A 153-amino-acid chain; its full sequence is Ribosome-binding factor A (153 aa).

Residues 116 to 153 (DAQVAEQAQGAQYAAGEDAYRTPSDEDDAEGPESAPRV) form a disordered region. The segment covering 119–132 (VAEQAQGAQYAAGE) has biased composition (low complexity).

Belongs to the RbfA family. In terms of assembly, monomer. Binds 30S ribosomal subunits, but not 50S ribosomal subunits or 70S ribosomes.

The protein localises to the cytoplasm. In terms of biological role, one of several proteins that assist in the late maturation steps of the functional core of the 30S ribosomal subunit. Associates with free 30S ribosomal subunits (but not with 30S subunits that are part of 70S ribosomes or polysomes). Required for efficient processing of 16S rRNA. May interact with the 5'-terminal helix region of 16S rRNA. The chain is Ribosome-binding factor A from Kocuria rhizophila (strain ATCC 9341 / DSM 348 / NBRC 103217 / DC2201).